The following is a 440-amino-acid chain: MKLLHLIFLLALTTGISAVLIYIIGVSNLYESNRFTNEDLEALQSLQNGFQKCVSANGLGLQAAMGRDYCKVSINFPKDTVPKWKDPKSGELEGLSYEFDLCEAVATWEQVRNSSTILTKEYIDALPNGWEDYAWRRINKGIQLNRCQNKSLCIEKLSLVLPETPPYFPRQFGRCAVIGNSGDLLKTKFGKEIDTYDTVLRENGAPIQNYKEYVGEKSTFRLLNRGSAKALDKVVELDEKKQEVLLVKTTIHDIMNKMIREVPIKNPVYLMLGASFGSAAKGTGLKALEFALSTCDSVDMYGFTVDPGYKEWTRYFSESRQGHTPLHGRAYYQMMECLGLIKIHSPMRADPNRVVKWVPSRSTIRSARIAAEKLLRRVGAGSADPLASCSIVKKRNKNKRPMVSHLRKPVSDHQKFVRSTSMYPVEHSPGHGQLCITPAD.

The Cytoplasmic portion of the chain corresponds to 1–5; the sequence is MKLLH. The chain crosses the membrane as a helical; Signal-anchor for type II membrane protein span at residues 6-26; it reads LIFLLALTTGISAVLIYIIGV. Topologically, residues 27-440 are lumenal; sequence SNLYESNRFT…HGQLCITPAD (414 aa). 2 N-linked (GlcNAc...) asparagine glycosylation sites follow: Asn113 and Asn149.

This sequence belongs to the glycosyltransferase 29 family.

It is found in the golgi apparatus membrane. Its function is as follows. May be involved in the transfer of 2-keto-3-deoxy-D-lyxo-heptulosaric acid (Dha) and/or 2-keto-3-deoxy-D-manno-octulosonic acid (Kdo) on the homogalacturonan backbone of rhamnogalacturonan-II. Required for efficient pollen grain germination and pollen tube elongation. Does not possess sialyltransferase activity in vitro. This Arabidopsis thaliana (Mouse-ear cress) protein is Sialyltransferase-like protein 2.